A 352-amino-acid polypeptide reads, in one-letter code: N-acetyl-gamma-glutamyl-phosphate reductase (352 aa).

Residue Cys155 is part of the active site.

It belongs to the NAGSA dehydrogenase family. Type 1 subfamily.

Its subcellular location is the cytoplasm. The enzyme catalyses N-acetyl-L-glutamate 5-semialdehyde + phosphate + NADP(+) = N-acetyl-L-glutamyl 5-phosphate + NADPH + H(+). Its pathway is amino-acid biosynthesis; L-arginine biosynthesis; N(2)-acetyl-L-ornithine from L-glutamate: step 3/4. Its function is as follows. Catalyzes the NADPH-dependent reduction of N-acetyl-5-glutamyl phosphate to yield N-acetyl-L-glutamate 5-semialdehyde. The polypeptide is N-acetyl-gamma-glutamyl-phosphate reductase (Crocosphaera subtropica (strain ATCC 51142 / BH68) (Cyanothece sp. (strain ATCC 51142))).